The sequence spans 734 residues: MWKTWLQGGARVIFDDYKPYLRLDPQNGDLLLNEQLDREALCDLTEPCILHFQVLFENPLQFFRAELLVKDINDHTPTFLNNHMLLKISEGATLGTLFQIDSAQDLDVGKNGVQNYTISPNPHFHLKLRDSDEGRKYPELVLDQSLDREKVSEFSLTLTAVDGGSPPRSGTTLINVVVLDISDNAPEFEKPVYEVLVPESSPLDSLIIKASATDLDAGINGELSYSFSHVSRDVRKTFEIHPISGEVYLKAPLDFEIIQSYIINIQAIEGGSLSGKSSILVRVVDVNDNPPEIAMTSLTSPIPENSSPEMVVAVFSIRDQDAGDNGRTVCSIQDNLPFVLKPTFKNFYALVTEHPLDREVRNEYNITITVTDLGTPRLKTEHNITVLVSDVNDNAPIFTQTSYTLFVRENNSPALHIGSVSATDRDSGTNAQVTYSLLPPQDPHLPLTSLVSINADNGHLFALRSLDYEALQEFGFRVGAADHGSPALSSEVLVRVLVLDANDNSPFVLYPLQNGSAPCTELVPRAAEPGYLVTKVVAVDGDSGQNAWLSYQLLKATEPGLFGVWAHNGEGRTARLLSERDAAKHRLVVLVKDNGEPPRSATATLHVLLVEGFSQPYLPLTEAAPSQAQADSLTVYLVVALASVSSLFLFSVFLFVAVRLCRRSRAASMGRCSVPECPFPGHLVDVSGTGTLSQSYQYEVCLTGGSGANEFKFLKPVIPNLLSRDSEMEKAPPF.

5 consecutive Cadherin domains span residues 1–79, 80–188, 189–293, 294–398, and 399–508; these read MWKT…TPTF, LNNH…APEF, EKPV…PPEI, AMTS…APIF, and TQTS…SPFV. Asparagine 115 carries an N-linked (GlcNAc...) asparagine glycan. N-linked (GlcNAc...) asparagine glycans are attached at residues asparagine 365 and asparagine 383. Residue asparagine 514 is glycosylated (N-linked (GlcNAc...) asparagine). A Cadherin 6 domain is found at 515 to 621; the sequence is GSAPCTELVP…GFSQPYLPLT (107 aa). Residues 638-658 form a helical membrane-spanning segment; that stretch reads VVALASVSSLFLFSVFLFVAV.

Its subcellular location is the cell membrane. In terms of biological role, potential calcium-dependent cell-adhesion protein. In Homo sapiens (Human), this protein is Putative protocadherin beta-18 (PCDHB18P).